Consider the following 1982-residue polypeptide: CASP8-associated protein 2 (1982 aa).

Ala2 carries the N-acetylalanine modification. Residue Ser20 is modified to Phosphoserine. The segment covering 159–191 (VKTKDLKSRSPHLDDCSKTDHRAKSDVSKDVHH) has biased composition (basic and acidic residues). The tract at residues 159–552 (VKTKDLKSRS…ESGPNETKNK (394 aa)) is disordered. The residue at position 194 (Ser194) is a Phosphoserine. The span at 198-210 (LEKEGKPHSDKRS) shows a compositional bias: basic and acidic residues. A compositionally biased stretch (polar residues) spans 225 to 240 (GVWSRSHYQVGEGSSN). Residues 286–395 (GHPEKYGKGE…ERASLPHSKN (110 aa)) show a composition bias toward basic and acidic residues. A compositionally biased stretch (polar residues) spans 396–405 (EITFSHNSSK). 3 stretches are compositionally biased toward basic and acidic residues: residues 406-423 (YHLE…DKSV), 444-455 (KNIDSKEVDAMH), and 463-524 (KAER…KGEV). Ser567 is modified (phosphoserine). The disordered stretch occupies residues 569-593 (AKKQPVSQDNQHKITDIPKSSGVCD). Phosphoserine occurs at positions 658, 815, and 875. Disordered stretches follow at residues 875 to 1017 (SPPQ…DKVM), 1157 to 1188 (FGRD…DNSN), and 1251 to 1283 (ERSL…HATL). Positions 894-904 (SAHSTSKSQSD) are enriched in polar residues. Composition is skewed to basic and acidic residues over residues 905-924 (LNKE…EADT), 936-965 (GEIR…DVRK), 999-1016 (KRPD…KDKV), and 1157-1170 (FGRD…EKTS). Ser940 carries the post-translational modification Phosphoserine. Phosphoserine is present on Ser1161. 2 stretches are compositionally biased toward polar residues: residues 1171–1181 (KQNAQYSNSQK) and 1269–1281 (GSSI…SQHA). Lys1343 bears the N6-acetyllysine mark. The short motif at 1683-1687 (YVDLT) is the SUMO interaction motif 1 (SIM); mediates the binding to polysumoylated substrates element. The interval 1709-1982 (DQLGCSGGNL…MKLFEKSKCR (274 aa)) is NCOA2-binding. The short motif at 1737–1741 (FIDLT) is the SUMO interaction motif 2 (SIM); mediates the binding to polysumoylated substrates element. The short motif at 1794–1798 (YIDLT) is the SUMO interaction motif 3 (SIM); mediates the binding to polysumoylated substrates element. The interval 1803 to 1909 (SSCEVKKDEL…IKDSSAALAT (107 aa)) is disordered. Residues 1851 to 1865 (KETDLTNKEKTKKPT) are compositionally biased toward basic and acidic residues.

Self-associates. Component of the death-inducing signaling complex (DISC) with CASP8, FADD and FAS. Interacts with NCOA2 and NCOA3. Interacts with SRRT. Interacts with TRAF2. Interacts with NPAT. Interacts (via SIM domains) with SUMO1 and SUMO2. Interacts with SP100; may negatively regulate CASP8AP2 export from the nucleus to the cytoplasm.

It is found in the cytoplasm. The protein localises to the nucleus. The protein resides in the PML body. Its subcellular location is the mitochondrion. Its function is as follows. Participates in TNF-alpha-induced blockade of glucocorticoid receptor (GR) transactivation at the nuclear receptor coactivator level, upstream and independently of NF-kappa-B. Suppresses both NCOA2- and NCOA3-induced enhancement of GR transactivation. Involved in TNF-alpha-induced activation of NF-kappa-B via a TRAF2-dependent pathway. Acts as a downstream mediator for CASP8-induced activation of NF-kappa-B. Required for the activation of CASP8 in FAS-mediated apoptosis. Required for histone gene transcription and progression through S phase. In Homo sapiens (Human), this protein is CASP8-associated protein 2.